The following is a 214-amino-acid chain: Uridine kinase (214 aa).

Residue G15–S22 participates in ATP binding.

The protein belongs to the uridine kinase family.

Its subcellular location is the cytoplasm. The catalysed reaction is uridine + ATP = UMP + ADP + H(+). It catalyses the reaction cytidine + ATP = CMP + ADP + H(+). It participates in pyrimidine metabolism; CTP biosynthesis via salvage pathway; CTP from cytidine: step 1/3. Its pathway is pyrimidine metabolism; UMP biosynthesis via salvage pathway; UMP from uridine: step 1/1. This chain is Uridine kinase, found in Tolumonas auensis (strain DSM 9187 / NBRC 110442 / TA 4).